The primary structure comprises 567 residues: Urease subunit alpha (567 aa).

Residues 129–567 form the Urease domain; the sequence is GGVDTHIHFI…LPMAQRYFLF (439 aa). The Ni(2+) site is built by H134, H136, and K217. K217 carries the post-translational modification N6-carboxylysine. H219 lines the substrate pocket. Ni(2+)-binding residues include H246 and H272. H320 (proton donor) is an active-site residue. Residue D360 coordinates Ni(2+).

The protein belongs to the metallo-dependent hydrolases superfamily. Urease alpha subunit family. As to quaternary structure, heterotrimer of UreA (gamma), UreB (beta) and UreC (alpha) subunits. Three heterotrimers associate to form the active enzyme. The cofactor is Ni cation. Carboxylation allows a single lysine to coordinate two nickel ions.

It localises to the cytoplasm. It carries out the reaction urea + 2 H2O + H(+) = hydrogencarbonate + 2 NH4(+). It participates in nitrogen metabolism; urea degradation; CO(2) and NH(3) from urea (urease route): step 1/1. In Proteus hauseri, this protein is Urease subunit alpha.